Here is a 283-residue protein sequence, read N- to C-terminus: Diaminopimelate epimerase (283 aa).

Residues N13 and N65 each coordinate substrate. C74 serves as the catalytic Proton donor. Substrate-binding positions include 75 to 76 (GN), N196, and 214 to 215 (ER). The active-site Proton acceptor is C223. 224 to 225 (GT) serves as a coordination point for substrate.

The protein belongs to the diaminopimelate epimerase family. Homodimer.

The protein localises to the cytoplasm. It catalyses the reaction (2S,6S)-2,6-diaminopimelate = meso-2,6-diaminopimelate. The protein operates within amino-acid biosynthesis; L-lysine biosynthesis via DAP pathway; DL-2,6-diaminopimelate from LL-2,6-diaminopimelate: step 1/1. Functionally, catalyzes the stereoinversion of LL-2,6-diaminopimelate (L,L-DAP) to meso-diaminopimelate (meso-DAP), a precursor of L-lysine and an essential component of the bacterial peptidoglycan. This chain is Diaminopimelate epimerase, found in Alkaliphilus metalliredigens (strain QYMF).